Consider the following 479-residue polypeptide: Anaerobic nitric oxide reductase flavorubredoxin (479 aa).

Positions 30-210 (LRGSSYNSYL…PFSRLVTPKI (181 aa)) are zinc metallo-hydrolase. Positions 79, 81, 83, 147, 166, and 227 each coordinate Fe cation. Residues 254-393 (ITIFYDTMSN…LCRQHGRDIA (140 aa)) enclose the Flavodoxin-like domain. Residues 260–264 (TMSNN) and 342–369 (AFGS…EMSL) contribute to the FMN site. The region spanning 423–474 (GPKMQCSVCQWIYDPALGEPLQDVAPGTPWSDVPDNFLCPECSLGKDVFDVL) is the Rubredoxin-like domain. Cys428, Cys431, Cys461, and Cys464 together coordinate Fe cation.

In the N-terminal section; belongs to the zinc metallo-hydrolase group 3 family. Homotetramer. Requires Fe cation as cofactor. FMN is required as a cofactor.

Its subcellular location is the cytoplasm. The protein operates within nitrogen metabolism; nitric oxide reduction. Functionally, anaerobic nitric oxide reductase; uses NADH to detoxify nitric oxide (NO), protecting several 4Fe-4S NO-sensitive enzymes. Has at least 2 reductase partners, only one of which (NorW, flavorubredoxin reductase) has been identified. NO probably binds to the di-iron center; electrons enter from the NorW at rubredoxin and are transferred sequentially to the FMN center and the di-iron center. Also able to function as an aerobic oxygen reductase. The sequence is that of Anaerobic nitric oxide reductase flavorubredoxin from Salmonella typhi.